A 349-amino-acid chain; its full sequence is Aldehyde reductase YahK (349 aa).

Zn(2+) is bound by residues C40, H62, C93, C96, C99, C107, and C158.

This sequence belongs to the zinc-containing alcohol dehydrogenase family. It depends on Zn(2+) as a cofactor.

The catalysed reaction is a primary alcohol + NADP(+) = an aldehyde + NADPH + H(+). In terms of biological role, catalyzes the reduction of a wide range of aldehydes into their corresponding alcohols. Has a strong preference for NADPH over NADH as the electron donor. Cannot use a ketone as substrate. Is a major source of NADPH-dependent aldehyde reductase activity in E.coli. The in vivo functions of YahK has yet to be determined. This chain is Aldehyde reductase YahK (yahK), found in Escherichia coli (strain K12).